The sequence spans 274 residues: Penicillin-insensitive murein endopeptidase (274 aa).

The signal sequence occupies residues 1-19 (MNKTAIALLALLASSASLA). Disulfide bonds link C44–C265, C187–C235, and C216–C223. H110, H113, D120, D147, H150, and H211 together coordinate Zn(2+). The segment at 227 to 274 (PLPPPGDGCGAELQSWFEPPKPGTTKPEKKTPPPLPPSCQALLDEHVI) is disordered.

The protein belongs to the peptidase M74 family. As to quaternary structure, dimer. It depends on Zn(2+) as a cofactor.

It localises to the periplasm. Its function is as follows. Murein endopeptidase that cleaves the D-alanyl-meso-2,6-diamino-pimelyl amide bond that connects peptidoglycan strands. Likely plays a role in the removal of murein from the sacculus. This is Penicillin-insensitive murein endopeptidase from Escherichia coli O1:K1 / APEC.